The chain runs to 77 residues: NADH-ubiquinone oxidoreductase chain 4L (77 aa).

2 helical membrane-spanning segments follow: residues 15-37 and 44-64; these read WQRL…LKFS and MFFY…VVMV.

This sequence belongs to the complex I subunit 4L family.

The protein resides in the mitochondrion membrane. The enzyme catalyses a ubiquinone + NADH + 5 H(+)(in) = a ubiquinol + NAD(+) + 4 H(+)(out). In terms of biological role, core subunit of the mitochondrial membrane respiratory chain NADH dehydrogenase (Complex I) that is believed to belong to the minimal assembly required for catalysis. Complex I functions in the transfer of electrons from NADH to the respiratory chain. The immediate electron acceptor for the enzyme is believed to be ubiquinone. This chain is NADH-ubiquinone oxidoreductase chain 4L, found in Caenorhabditis elegans.